Consider the following 214-residue polypeptide: Thiamine-phosphate synthase (214 aa).

4-amino-2-methyl-5-(diphosphooxymethyl)pyrimidine contacts are provided by residues Gln37–Lys41 and Asn73. 2 residues coordinate Mg(2+): Asp74 and Asp93. Ser112 contributes to the 4-amino-2-methyl-5-(diphosphooxymethyl)pyrimidine binding site. Thr139 to Ser141 is a binding site for 2-[(2R,5Z)-2-carboxy-4-methylthiazol-5(2H)-ylidene]ethyl phosphate. Residue Lys142 coordinates 4-amino-2-methyl-5-(diphosphooxymethyl)pyrimidine. Residues Gly171 and Ile191–Ser192 each bind 2-[(2R,5Z)-2-carboxy-4-methylthiazol-5(2H)-ylidene]ethyl phosphate.

This sequence belongs to the thiamine-phosphate synthase family. The cofactor is Mg(2+).

The enzyme catalyses 2-[(2R,5Z)-2-carboxy-4-methylthiazol-5(2H)-ylidene]ethyl phosphate + 4-amino-2-methyl-5-(diphosphooxymethyl)pyrimidine + 2 H(+) = thiamine phosphate + CO2 + diphosphate. It carries out the reaction 2-(2-carboxy-4-methylthiazol-5-yl)ethyl phosphate + 4-amino-2-methyl-5-(diphosphooxymethyl)pyrimidine + 2 H(+) = thiamine phosphate + CO2 + diphosphate. The catalysed reaction is 4-methyl-5-(2-phosphooxyethyl)-thiazole + 4-amino-2-methyl-5-(diphosphooxymethyl)pyrimidine + H(+) = thiamine phosphate + diphosphate. The protein operates within cofactor biosynthesis; thiamine diphosphate biosynthesis; thiamine phosphate from 4-amino-2-methyl-5-diphosphomethylpyrimidine and 4-methyl-5-(2-phosphoethyl)-thiazole: step 1/1. In terms of biological role, condenses 4-methyl-5-(beta-hydroxyethyl)thiazole monophosphate (THZ-P) and 2-methyl-4-amino-5-hydroxymethyl pyrimidine pyrophosphate (HMP-PP) to form thiamine monophosphate (TMP). The polypeptide is Thiamine-phosphate synthase (Listeria monocytogenes serotype 4b (strain CLIP80459)).